The chain runs to 281 residues: Nicotinamide/nicotinic acid mononucleotide adenylyltransferase 1 (281 aa).

Beta-nicotinamide D-ribonucleotide contacts are provided by Gly-15 and Ser-16. Residues Gly-15, Ser-16, Phe-17, and Met-23 each contribute to the NAD(+) site. 15-17 (GSF) contacts ATP. His-24 contributes to the ATP binding site. 2 residues coordinate beta-nicotinamide D-ribonucleotide: Tyr-55 and Lys-57. Residue Lys-57 coordinates NAD(+). An ATP-binding site is contributed by Lys-58. Residues Trp-92 and Thr-95 each contribute to the beta-nicotinamide D-ribonucleotide site. NAD(+) is bound by residues Trp-92 and Thr-95. The segment at 113-143 (PQQNSPVLEKPGRKRKWAEQKQDISEKKSLE) is disordered. Position 117 is a phosphoserine (Ser-117). Residues 123-129 (PGRKRKW) carry the Nuclear localization signal motif. A compositionally biased stretch (basic and acidic residues) spans 129–143 (WAEQKQDISEKKSLE). 6 residues coordinate NAD(+): Gly-158, Asp-160, Leu-170, Trp-171, Glu-217, and Asn-221. Residue 158–160 (GAD) participates in ATP binding. Beta-nicotinamide D-ribonucleotide is bound by residues Leu-170 and Trp-171. 226 to 229 (TKIR) contacts ATP.

This sequence belongs to the eukaryotic NMN adenylyltransferase family. In terms of assembly, homohexamer. Interacts with ADPRT/PARP1. The cofactor is Zn(2+). Requires Mg(2+) as cofactor.

The protein resides in the nucleus. It carries out the reaction beta-nicotinamide D-ribonucleotide + ATP + H(+) = diphosphate + NAD(+). The catalysed reaction is nicotinate beta-D-ribonucleotide + ATP + H(+) = deamido-NAD(+) + diphosphate. It functions in the pathway cofactor biosynthesis; NAD(+) biosynthesis; NAD(+) from nicotinamide D-ribonucleotide: step 1/1. Its pathway is cofactor biosynthesis; NAD(+) biosynthesis; deamido-NAD(+) from nicotinate D-ribonucleotide: step 1/1. Activity is strongly inhibited by galotannin. Inhibited by P1-(adenosine-5')-P4-(nicotinic-acid-riboside-5')-tetraphosphate (Nap4AD). In terms of biological role, catalyzes the formation of NAD(+) from nicotinamide mononucleotide (NMN) and ATP. Can also use the deamidated form; nicotinic acid mononucleotide (NaMN) as substrate with the same efficiency. Can use triazofurin monophosphate (TrMP) as substrate. Also catalyzes the reverse reaction, i.e. the pyrophosphorolytic cleavage of NAD(+). For the pyrophosphorolytic activity, prefers NAD(+) and NaAD as substrates and degrades NADH, nicotinic acid adenine dinucleotide phosphate (NHD) and nicotinamide guanine dinucleotide (NGD) less effectively. Involved in the synthesis of ATP in the nucleus, together with PARP1, PARG and NUDT5. Nuclear ATP generation is required for extensive chromatin remodeling events that are energy-consuming. Fails to cleave phosphorylated dinucleotides NADP(+), NADPH and NaADP(+). Also acts as a cofactor for glutamate and aspartate ADP-ribosylation by directing PARP1 catalytic activity to glutamate and aspartate residues on histones. Protects against axonal degeneration following mechanical or toxic insults. Delays axonal degeneration after axotomy. Results in a &gt;10-fold increase in intact neurites 72 hours after injury. Neural protection does not correlate with cellular NAD(+) levels but may still require enzyme activity. This Bos taurus (Bovine) protein is Nicotinamide/nicotinic acid mononucleotide adenylyltransferase 1 (NMNAT1).